Reading from the N-terminus, the 212-residue chain is MNSKDCVVIGIAGASASGKSLIAKTIYEELCRDLGTDQIGVIAEDAYYRDQGHLSMDQRVLTNYDHPKALDHELLCTHLRALKQGHAVDIPVYSYNDHTRTDEKVTLTPKKVIILEGILLLTDPALRKEMDASVFMDTPLDICFMRRLSRDVAERGRTMESVMQQYTETVRPMFLQFIEPSKQYADIIVPRGGKNRIATDILKARIQHLLAK.

Position 13 to 20 (13 to 20) interacts with ATP; that stretch reads GASASGKS.

The protein belongs to the uridine kinase family.

The protein localises to the cytoplasm. The catalysed reaction is uridine + ATP = UMP + ADP + H(+). It catalyses the reaction cytidine + ATP = CMP + ADP + H(+). It functions in the pathway pyrimidine metabolism; CTP biosynthesis via salvage pathway; CTP from cytidine: step 1/3. The protein operates within pyrimidine metabolism; UMP biosynthesis via salvage pathway; UMP from uridine: step 1/1. In Shewanella halifaxensis (strain HAW-EB4), this protein is Uridine kinase.